The following is a 138-amino-acid chain: Small ribosomal subunit protein bS6 (138 aa).

Residues 97–121 (TEQSEMLKAEENRSERRERRDRPDN) show a composition bias toward basic and acidic residues. The disordered stretch occupies residues 97-138 (TEQSEMLKAEENRSERRERRDRPDNTDGSNENDSDSDNNADE). The segment covering 126 to 138 (NENDSDSDNNADE) has biased composition (acidic residues).

The protein belongs to the bacterial ribosomal protein bS6 family.

Its function is as follows. Binds together with bS18 to 16S ribosomal RNA. The polypeptide is Small ribosomal subunit protein bS6 (Stutzerimonas stutzeri (strain A1501) (Pseudomonas stutzeri)).